Reading from the N-terminus, the 678-residue chain is Translation initiation factor eIF2B subunit epsilon (678 aa).

Thr-172 bears the Phosphothreonine mark. The interval 467-489 is disordered; sequence STNELHLSDSESSETSSSSEEDM. The residue at position 500 (Ser-500) is a Phosphoserine. Thr-503 carries the phosphothreonine modification. The residue at position 506 (Ser-506) is a Phosphoserine. The W2 domain maps to 508–674; it reads DFDEGDFNKE…NTAESESESE (167 aa).

It belongs to the eIF-2B gamma/epsilon subunits family. Component of the translation initiation factor 2B (eIF2B) complex which is a heterodecamer of two sets of five different subunits: alpha, beta, gamma, delta and epsilon. Subunits alpha, beta and delta comprise a regulatory subcomplex and subunits epsilon and gamma comprise a catalytic subcomplex. Within the complex, the hexameric regulatory complex resides at the center, with the two heterodimeric catalytic subcomplexes bound on opposite sides.

The protein resides in the cytoplasm. It localises to the cytosol. Acts as a component of the translation initiation factor 2B (eIF2B) complex, which catalyzes the exchange of GDP for GTP on the eukaryotic initiation factor 2 (eIF2) complex gamma subunit. Its guanine nucleotide exchange factor activity is repressed when bound to eIF2 complex phosphorylated on the alpha subunit, thereby limiting the amount of methionyl-initiator methionine tRNA available to the ribosome and consequently global translation is repressed. The sequence is that of Translation initiation factor eIF2B subunit epsilon (tif225) from Schizosaccharomyces pombe (strain 972 / ATCC 24843) (Fission yeast).